Here is a 316-residue protein sequence, read N- to C-terminus: Olfactory receptor 2G6 (316 aa).

Residues 1–25 are Extracellular-facing; that stretch reads MEETNNSSEKGFLLLGFSDQPQLER. 2 N-linked (GlcNAc...) asparagine glycosylation sites follow: Asn5 and Asn6. The helical transmembrane segment at 26-49 threads the bilayer; the sequence is FLFAIILYFYVLSLLGNTALILVC. Residues 50–57 lie on the Cytoplasmic side of the membrane; the sequence is CLDSRLHT. Residues 58–79 form a helical membrane-spanning segment; the sequence is PMYFFLSNLSCVDICFTTSVAP. Residues 80-100 are Extracellular-facing; that stretch reads QLLVTMNKKDKTMSYGGCVAQ. A disulfide bridge links Cys97 with Cys189. A helical transmembrane segment spans residues 101–120; the sequence is LYVAMGLGSSECILLAVMAY. The Cytoplasmic segment spans residues 121–139; the sequence is DRYAAVCRPLRYIAIMHPR. Residues 140-158 traverse the membrane as a helical segment; sequence FCASLAGGAWLSGLITSLI. At 159 to 195 the chain is on the extracellular side; that stretch reads QCSLTVQLPLCGHRTLDHIFCEVPVLIKLACVDTTFN. Residues 196-219 traverse the membrane as a helical segment; the sequence is EAELFVASVVFLIVPVLLILVSYG. The Cytoplasmic portion of the chain corresponds to 220 to 236; it reads FITQAVLRIKSAAGRQK. The helical transmembrane segment at 237-259 threads the bilayer; sequence AFGTCSSHLVVVIIFYGTIIFMY. The Extracellular segment spans residues 260–272; it reads LQPANRRSKNQGK. The helical transmembrane segment at 273-292 threads the bilayer; it reads FVSLFYTIVTPLLNPIIYTL. Residues 293 to 316 lie on the Cytoplasmic side of the membrane; that stretch reads RNKDVKGALRTLILGSAAGQSHKD.

The protein belongs to the G-protein coupled receptor 1 family.

It localises to the cell membrane. Its function is as follows. Odorant receptor. The chain is Olfactory receptor 2G6 (OR2G6) from Homo sapiens (Human).